A 179-amino-acid chain; its full sequence is UPF0227 protein SO_2251 (179 aa).

This sequence belongs to the UPF0227 family.

This is UPF0227 protein SO_2251 from Shewanella oneidensis (strain ATCC 700550 / JCM 31522 / CIP 106686 / LMG 19005 / NCIMB 14063 / MR-1).